A 919-amino-acid chain; its full sequence is Glutamate receptor ionotropic, kainate 3 (919 aa).

Residues 1 to 31 (MTAPWRRLRSLVWEYWAGLLVCAFWIPDSRG) form the signal peptide. The Extracellular segment spans residues 32 to 563 (MPHVIRIGGI…VFSFLNPLSP (532 aa)). N-linked (GlcNAc...) asparagine glycosylation is found at Asn-70, Asn-76, Asn-278, Asn-381, Asn-415, Asn-426, and Asn-433. An intrachain disulfide couples Cys-99 to Cys-350. 3 residues coordinate L-glutamate: Pro-518, Thr-520, and Arg-525. Asn-548 and Asn-551 each carry an N-linked (GlcNAc...) asparagine glycan. Residues 564–584 (DIWMYVLLAYLGVSCVLFVIA) traverse the membrane as a helical segment. Residues 585–636 (RFSPYEWYDAHPCNPGSEVVENNFTLLNSFWFGMGSLMQQGSELMPKALSTR) lie on the Cytoplasmic side of the membrane. A helical membrane pass occupies residues 637–657 (IIGGIWWFFTLIIISSYTANL). At 658–820 (AAFLTVERME…KEASALGIQK (163 aa)) the chain is on the extracellular side. The L-glutamate site is built by Ala-691, Thr-692, and Glu-739. Asn-752 carries an N-linked (GlcNAc...) asparagine glycan. A helical transmembrane segment spans residues 821–841 (IGGIFIVLAAGLVLSVLVAVG). The Cytoplasmic portion of the chain corresponds to 842–919 (EFVYKLRKTA…CSTSLAPVFP (78 aa)). Ser-869 is modified (phosphoserine). Lys-887 participates in a covalent cross-link: Glycyl lysine isopeptide (Lys-Gly) (interchain with G-Cter in SUMO1).

Belongs to the glutamate-gated ion channel (TC 1.A.10.1) family. GRIK3 subfamily. In terms of assembly, homotetramer, and heterotetramer with either GRIK4 or GRIK5. Can form functional heteromeric receptors with GRIK2. Interacts with PRKCABP. Interacts with NETO2.

It is found in the cell membrane. It localises to the postsynaptic cell membrane. It catalyses the reaction Ca(2+)(in) = Ca(2+)(out). Ionotropic glutamate receptor that functions as a cation-permeable ligand-gated ion channel, gated by L-glutamate and the glutamatergic agonist kainic acid. Binding of the excitatory neurotransmitter L-glutamate induces a conformation change, leading to the opening of the cation channel, and thereby converts the chemical signal to an electrical impulse. The receptor then desensitizes rapidly and enters a transient inactive state, characterized by the presence of bound agonist. In association with GRIK2, involved in presynaptic facilitation of glutamate release at hippocampal mossy fiber synapses. The chain is Glutamate receptor ionotropic, kainate 3 (GRIK3) from Macaca fascicularis (Crab-eating macaque).